We begin with the raw amino-acid sequence, 265 residues long: Probable autolysin SsaALP (265 aa).

Residues 1–25 (MKKLAFAITATSGAAAFLTHHDAQA) form the signal peptide. 2 consecutive LysM domains span residues 27–70 (TQHT…VISV) and 89–132 (SSHT…TLQI). A disordered region spans residues 72–92 (GSDAQNTSNTSPQAGSASSHT). Residues 74–92 (DAQNTSNTSPQAGSASSHT) show a composition bias toward polar residues. A Peptidase C51 domain is found at 141 to 265 (TPTATTGSNG…SEVSSYAFIH (125 aa)).

It catalyses the reaction Hydrolyzes the link between N-acetylmuramoyl residues and L-amino acid residues in certain cell-wall glycopeptides.. Has weak lytic activity toward S.aureus cells. The protein is Probable autolysin SsaALP of Staphylococcus aureus (strain NCTC 8325 / PS 47).